A 91-amino-acid polypeptide reads, in one-letter code: UPF0250 protein PputW619_0619 (91 aa).

Belongs to the UPF0250 family.

The sequence is that of UPF0250 protein PputW619_0619 from Pseudomonas putida (strain W619).